A 446-amino-acid polypeptide reads, in one-letter code: Histidine--tRNA ligase (446 aa).

This sequence belongs to the class-II aminoacyl-tRNA synthetase family. In terms of assembly, homodimer.

It is found in the cytoplasm. It carries out the reaction tRNA(His) + L-histidine + ATP = L-histidyl-tRNA(His) + AMP + diphosphate + H(+). The polypeptide is Histidine--tRNA ligase (Burkholderia pseudomallei (strain 1710b)).